The chain runs to 393 residues: Pre-mRNA splicing factor SR-like 1 (393 aa).

The tract at residues 173 to 393 is disordered; that stretch reads MNLPTKPSGS…VIKLGGSSWR (221 aa). Residues 249 to 312 are compositionally biased toward basic and acidic residues; it reads QSRDYYSDRD…RNDYEDDRSR (64 aa). Positions 301–308 match the Nuclear localization signal motif; sequence SRRNDYED. Residues 313-325 show a composition bias toward basic residues; the sequence is HDRRSRSRSRSRS. Basic and acidic residues-rich tracts occupy residues 329 to 346 and 356 to 385; these read QIEREPTPKRDSSNKEKS and KLKDLYGDASSQKRDEGFGTRKDSSSEEVI.

Belongs to the PRP38 family. Phosphorylated. In terms of tissue distribution, mostly expressed in siliques and leaves, also present in seedlings, flowers and stems, and, at low levels, in roots.

Its subcellular location is the nucleus. In terms of biological role, may be required for pre-mRNA splicing. Confers salt tolerance to LiCl and NaCl. The chain is Pre-mRNA splicing factor SR-like 1 from Arabidopsis thaliana (Mouse-ear cress).